The following is a 203-amino-acid chain: Large ribosomal subunit protein uL13 (203 aa).

An N-acetylalanine modification is found at Ala2. At Arg59 the chain carries Citrulline. Residue Ser77 is modified to Phosphoserine. Arg140 is subject to Citrulline. Lys191 is modified (N6-acetyllysine).

It belongs to the universal ribosomal protein uL13 family. As to quaternary structure, component of the 60S ribosome. Component of the GAIT complex. Interacts with EIF4G1. Phosphorylation at Ser-77 upon interferon-gamma treatment in monocytes involves a DAPK1-DAPK3 kinase cascade and is causing release from the ribosome, association with the GAIT complex and subsequent involvement in transcript-selective translation inhibition. Post-translationally, citrullinated by PADI4.

Its subcellular location is the cytoplasm. In terms of biological role, associated with ribosomes but is not required for canonical ribosome function and has extra-ribosomal functions. Component of the GAIT (gamma interferon-activated inhibitor of translation) complex which mediates interferon-gamma-induced transcript-selective translation inhibition in inflammation processes. Upon interferon-gamma activation and subsequent phosphorylation dissociates from the ribosome and assembles into the GAIT complex which binds to stem loop-containing GAIT elements in the 3'-UTR of diverse inflammatory mRNAs (such as ceruplasmin) and suppresses their translation. In the GAIT complex interacts with m7G cap-bound eIF4G at or near the eIF3-binding site and blocks the recruitment of the 43S ribosomal complex. Involved in methylation of rRNA. This Oryctolagus cuniculus (Rabbit) protein is Large ribosomal subunit protein uL13 (RPL13A).